The primary structure comprises 1158 residues: ATP-dependent helicase/deoxyribonuclease subunit B (1158 aa).

The UvrD-like helicase ATP-binding domain occupies 1 to 275 (MTLHAYLGRA…QYFNQLYRFN (275 aa)). 8 to 15 (GRAGTGKS) is an ATP binding site. A UvrD-like helicase C-terminal domain is found at 269–583 (NQLYRFNNQD…SIGTMDLAKV (315 aa)). C784, C1112, C1115, and C1121 together coordinate [4Fe-4S] cluster.

The protein belongs to the helicase family. AddB/RexB type 1 subfamily. As to quaternary structure, heterodimer of AddA and AddB. The cofactor is Mg(2+). [4Fe-4S] cluster is required as a cofactor.

Its function is as follows. The heterodimer acts as both an ATP-dependent DNA helicase and an ATP-dependent, dual-direction single-stranded exonuclease. Recognizes the chi site generating a DNA molecule suitable for the initiation of homologous recombination. The AddB subunit has 5' -&gt; 3' nuclease activity but not helicase activity. This chain is ATP-dependent helicase/deoxyribonuclease subunit B, found in Staphylococcus aureus (strain USA300).